The following is a 354-amino-acid chain: Kelch domain-containing protein 8B (354 aa).

8 Kelch repeats span residues 1–31 (MAAG…HQDG), 32–79 (HLLV…VLGK), 81–127 (VLVV…ERDG), 128–175 (MVYA…LHGN), 176–222 (KIYV…MAEG), 224–281 (VFSL…SLGG), 282–329 (NIVA…QAGP), and 331–354 (LFVI…RDGV).

It localises to the cytoplasm. It is found in the midbody. Involved in pinching off the separated nuclei at the cleavage furrow and in cytokinesis. Required for mitotic integrity and maintenance of chromosomal stability. Protects cells against mitotic errors, centrosomal amplification, micronucleus formation and aneuploidy. Plays a key role of midbody function involving abscission of the daughter cells during cytokinesis and appropriate chromosomal and nuclear segregation into the daughter cells. The chain is Kelch domain-containing protein 8B (Klhdc8b) from Rattus norvegicus (Rat).